A 443-amino-acid polypeptide reads, in one-letter code: Probable 26S proteasome regulatory subunit 4 (443 aa).

The segment at 1–53 (MGQQQSGFGGRGNDRGAGDGEKKEKKKYEAPIPSRIGKKKKGSKGPDAASKLP) is disordered. Basic and acidic residues predominate over residues 12 to 29 (GNDRGAGDGEKKEKKKYE). 229–236 (GCPGTGKT) is a binding site for ATP.

Belongs to the AAA ATPase family.

It is found in the cytoplasm. The protein localises to the nucleus. Functionally, the 26S proteasome is involved in the ATP-dependent degradation of ubiquitinated proteins. The regulatory (or ATPase) complex confers ATP dependency and substrate specificity to the 26S complex. May play a role in the degradation of microtubule severing protein mei-1. The chain is Probable 26S proteasome regulatory subunit 4 (rpt-2) from Caenorhabditis elegans.